A 412-amino-acid polypeptide reads, in one-letter code: Multifunctional CCA protein (412 aa).

ATP is bound by residues G8 and R11. Residues G8 and R11 each contribute to the CTP site. The Mg(2+) site is built by D21 and D23. ATP contacts are provided by R91, R137, and R140. Residues R91, R137, and R140 each contribute to the CTP site. The 102-residue stretch at 228-329 (TGIHTLMTLS…VKLFDSIDAW (102 aa)) folds into the HD domain.

It belongs to the tRNA nucleotidyltransferase/poly(A) polymerase family. Bacterial CCA-adding enzyme type 1 subfamily. In terms of assembly, monomer. Can also form homodimers and oligomers. Mg(2+) serves as cofactor. It depends on Ni(2+) as a cofactor.

The catalysed reaction is a tRNA precursor + 2 CTP + ATP = a tRNA with a 3' CCA end + 3 diphosphate. The enzyme catalyses a tRNA with a 3' CCA end + 2 CTP + ATP = a tRNA with a 3' CCACCA end + 3 diphosphate. Its function is as follows. Catalyzes the addition and repair of the essential 3'-terminal CCA sequence in tRNAs without using a nucleic acid template. Adds these three nucleotides in the order of C, C, and A to the tRNA nucleotide-73, using CTP and ATP as substrates and producing inorganic pyrophosphate. tRNA 3'-terminal CCA addition is required both for tRNA processing and repair. Also involved in tRNA surveillance by mediating tandem CCA addition to generate a CCACCA at the 3' terminus of unstable tRNAs. While stable tRNAs receive only 3'-terminal CCA, unstable tRNAs are marked with CCACCA and rapidly degraded. The sequence is that of Multifunctional CCA protein from Escherichia coli O127:H6 (strain E2348/69 / EPEC).